Reading from the N-terminus, the 885-residue chain is Alanine--tRNA ligase (885 aa).

Zn(2+)-binding residues include His-564, His-568, Cys-676, and His-680.

It belongs to the class-II aminoacyl-tRNA synthetase family. Zn(2+) serves as cofactor.

The protein resides in the cytoplasm. The enzyme catalyses tRNA(Ala) + L-alanine + ATP = L-alanyl-tRNA(Ala) + AMP + diphosphate. Functionally, catalyzes the attachment of alanine to tRNA(Ala) in a two-step reaction: alanine is first activated by ATP to form Ala-AMP and then transferred to the acceptor end of tRNA(Ala). Also edits incorrectly charged Ser-tRNA(Ala) and Gly-tRNA(Ala) via its editing domain. In Brucella ovis (strain ATCC 25840 / 63/290 / NCTC 10512), this protein is Alanine--tRNA ligase.